Consider the following 349-residue polypeptide: Divinyl chlorophyll a/b light-harvesting protein PcbA (349 aa).

Transmembrane regions (helical) follow at residues 27-47, 57-77, 89-109, 202-222, 242-262, and 304-324; these read FIAA…AFTL, VPMG…GIGF, VVAV…GGLM, VMGG…FHIA, AILS…AFWS, and LANV…WHAL.

It belongs to the PsbB/PsbC family. IsiA/Pcb subfamily. The antenna complex consists of divinyl chlorophylls (a and b) and divinyl chlorophyll a/b binding proteins and binds more divinyl chlorophyll b than does the antenna complex from high-light-adapted Prochlorococcus. Divinyl chlorophyll a is required as a cofactor. Divinyl chlorophyll b serves as cofactor.

Its subcellular location is the cellular thylakoid membrane. The antenna complex functions as a light receptor, it captures and delivers excitation energy to photosystems II and I. The Prochlorales pcb genes are not related to higher plant LHCs. This Prochlorococcus marinus (strain NATL2A) protein is Divinyl chlorophyll a/b light-harvesting protein PcbA (pcbA).